Reading from the N-terminus, the 436-residue chain is Histidinol dehydrogenase (436 aa).

Tyr135, Gln197, and Asn220 together coordinate NAD(+). 3 residues coordinate substrate: Thr243, Gln265, and His268. Zn(2+)-binding residues include Gln265 and His268. Catalysis depends on proton acceptor residues Glu334 and His335. Residues His335, Asp368, Glu422, and His427 each coordinate substrate. Asp368 is a binding site for Zn(2+). Zn(2+) is bound at residue His427.

It belongs to the histidinol dehydrogenase family. Zn(2+) is required as a cofactor.

It catalyses the reaction L-histidinol + 2 NAD(+) + H2O = L-histidine + 2 NADH + 3 H(+). The protein operates within amino-acid biosynthesis; L-histidine biosynthesis; L-histidine from 5-phospho-alpha-D-ribose 1-diphosphate: step 9/9. In terms of biological role, catalyzes the sequential NAD-dependent oxidations of L-histidinol to L-histidinaldehyde and then to L-histidine. In Deinococcus radiodurans (strain ATCC 13939 / DSM 20539 / JCM 16871 / CCUG 27074 / LMG 4051 / NBRC 15346 / NCIMB 9279 / VKM B-1422 / R1), this protein is Histidinol dehydrogenase.